The primary structure comprises 298 residues: Interferon-inducible double-stranded RNA-dependent protein kinase activator A homolog B (298 aa).

DRBM domains are found at residues 20 to 87 (TPIQ…ILRG), 112 to 180 (NPVG…KFKT), and 225 to 293 (DYVK…YLKI).

The protein belongs to the PRKRA family. As to quaternary structure, homodimer. Interacts with dicer1 and eif2ak2/pkr. Also able to interact with dsRNA. Associates with ribosomes. As to expression, expressed in brain, heart, kidney, liver, nerve and spleen.

It is found in the cytoplasm. The protein resides in the perinuclear region. The protein localises to the nucleus. Its subcellular location is the nucleolus. Functionally, activates eif2ak2/pkr in the absence of double-stranded RNA (dsRNA), leading to phosphorylation of eif2s1/efi2-alpha and inhibition of translation and induction of apoptosis. Required for siRNA production by dicer1 and for subsequent siRNA-mediated post-transcriptional gene silencing. Does not seem to be required for processing of pre-miRNA to miRNA by dicer1. This chain is Interferon-inducible double-stranded RNA-dependent protein kinase activator A homolog B (prkra-b), found in Xenopus laevis (African clawed frog).